The chain runs to 221 residues: Lipoprotein-releasing system ATP-binding protein LolD (221 aa).

The region spanning 8 to 220 (LKMISKHYKQ…YNLKHGLLNI (213 aa)) is the ABC transporter domain. 42 to 49 (GSSGSGKS) provides a ligand contact to ATP.

The protein belongs to the ABC transporter superfamily. Lipoprotein translocase (TC 3.A.1.125) family. In terms of assembly, the complex is composed of two ATP-binding proteins (LolD) and two transmembrane proteins (LolC and LolE).

The protein resides in the cell inner membrane. Its function is as follows. Part of the ABC transporter complex LolCDE involved in the translocation of mature outer membrane-directed lipoproteins, from the inner membrane to the periplasmic chaperone, LolA. Responsible for the formation of the LolA-lipoprotein complex in an ATP-dependent manner. The polypeptide is Lipoprotein-releasing system ATP-binding protein LolD (Rickettsia prowazekii (strain Madrid E)).